A 79-amino-acid chain; its full sequence is RNA-binding protein KhpA (79 aa).

A KH domain is found at 30–79 (GRVLEVRVHPDDLGKVIGRNGRTARALRTVVGAIGGRGVRVDLVDVDHVR).

Belongs to the KhpA RNA-binding protein family.

The protein resides in the cytoplasm. The protein localises to the nucleoid. A probable RNA-binding protein. This Streptomyces coelicolor (strain ATCC BAA-471 / A3(2) / M145) protein is RNA-binding protein KhpA.